The sequence spans 583 residues: Pentatricopeptide repeat-containing protein At3g59040 (583 aa).

PPR repeat units lie at residues 138–172 (SEID…GSTP), 173–207 (NVIS…GPEP), 208–242 (SAIT…KKSP), 246–280 (DQKM…GVPQ), 281–312 (STVT…DIQP), 313–347 (DVVS…GVRP), 348–382 (THKA…RIFP), 383–417 (DLWS…GFEP), 418–452 (NIVT…GIKA), and 453–487 (NQTI…GVPP). A disordered region spans residues 525–583 (VYGSDDDEEGVEDISSESSDDEDEGDDDDDDARETVLYDKPQEGSLGYGSLQTEELVGL). The segment covering 528–556 (SDDDEEGVEDISSESSDDEDEGDDDDDDA) has biased composition (acidic residues). Positions 557-566 (RETVLYDKPQ) are enriched in basic and acidic residues.

The protein belongs to the PPR family. P subfamily.

The chain is Pentatricopeptide repeat-containing protein At3g59040 from Arabidopsis thaliana (Mouse-ear cress).